A 387-amino-acid chain; its full sequence is UDP-N-acetylglucosamine--N-acetylmuramyl-(pentapeptide) pyrophosphoryl-undecaprenol N-acetylglucosamine transferase (387 aa).

Residues 1–22 form a disordered region; sequence MSEHVRSAGPPQASTAPSGGSA. UDP-N-acetyl-alpha-D-glucosamine is bound by residues 41-43, Asn158, Arg194, Ser222, Ile276, and Gln321; that span reads TGG.

The protein belongs to the glycosyltransferase 28 family. MurG subfamily.

The protein localises to the cell inner membrane. It catalyses the reaction di-trans,octa-cis-undecaprenyl diphospho-N-acetyl-alpha-D-muramoyl-L-alanyl-D-glutamyl-meso-2,6-diaminopimeloyl-D-alanyl-D-alanine + UDP-N-acetyl-alpha-D-glucosamine = di-trans,octa-cis-undecaprenyl diphospho-[N-acetyl-alpha-D-glucosaminyl-(1-&gt;4)]-N-acetyl-alpha-D-muramoyl-L-alanyl-D-glutamyl-meso-2,6-diaminopimeloyl-D-alanyl-D-alanine + UDP + H(+). It functions in the pathway cell wall biogenesis; peptidoglycan biosynthesis. Cell wall formation. Catalyzes the transfer of a GlcNAc subunit on undecaprenyl-pyrophosphoryl-MurNAc-pentapeptide (lipid intermediate I) to form undecaprenyl-pyrophosphoryl-MurNAc-(pentapeptide)GlcNAc (lipid intermediate II). This Polaromonas sp. (strain JS666 / ATCC BAA-500) protein is UDP-N-acetylglucosamine--N-acetylmuramyl-(pentapeptide) pyrophosphoryl-undecaprenol N-acetylglucosamine transferase.